A 392-amino-acid polypeptide reads, in one-letter code: Telomere-binding protein subunit beta (392 aa).

The segment at 234–392 is disordered; it reads QQVESVQVQP…ASKASKRSKK (159 aa). Over residues 247–256 the composition is skewed to basic residues; sequence GGAKGKKKAA. Residues 257-268 show a composition bias toward low complexity; it reads TKSATKKTVAAK. A compositionally biased stretch (basic and acidic residues) spans 269–284; that stretch reads KTAESADVRKSVDKIV. The segment covering 328–343 has biased composition (polar residues); the sequence is SPSGKKSTKTTDQMTM. Positions 374-384 are enriched in low complexity; it reads GKASATSGKAS.

Heterodimer of an alpha and a beta subunit.

The protein localises to the nucleus. Its subcellular location is the chromosome. It is found in the telomere. Functionally, may function as protective capping of the single-stranded telomeric overhang. May also participate in telomere length regulation during DNA replication. This Stylonychia mytilus (Ciliate) protein is Telomere-binding protein subunit beta (STY43).